The sequence spans 1470 residues: Calmodulin-regulated spectrin-associated protein 2 (1470 aa).

A Calponin-homology (CH) domain is found at 222 to 335; it reads WKLVPARYRK…FMAELFWWFE (114 aa). The segment at 374-397 is disordered; it reads SSSSSDFTSRYTRPQTHSSVSGGI. Polar residues predominate over residues 380–390; sequence FTSRYTRPQTH. A phosphoserine mark is found at S402 and S404. T412 carries the post-translational modification Phosphothreonine. Phosphoserine occurs at positions 450, 581, 582, 594, and 656. Disordered regions lie at residues 580-622 and 648-712; these read QSSP…EDSS and ASNP…EGSE. T661 bears the Phosphothreonine mark. Residue S663 is modified to Phosphoserine. A compositionally biased stretch (low complexity) spans 663 to 682; that stretch reads STKSQPGSSASSSSGVKMTS. Residues 686–696 show a composition bias toward basic and acidic residues; the sequence is QKFRKLNHTDG. Positions 739–776 form a coiled coil; that stretch reads LLASEMVHLRMRLEEKRRAIEAQKKKMEAAFTKQRQKM. A compositionally biased stretch (basic and acidic residues) spans 796–835; the sequence is REEAAGAEDEKVYTDRAKEKESQKMDGQRSKSLADIKESM. Residues 796-864 form a disordered region; the sequence is REEAAGAEDE…QWNLTSPSEE (69 aa). S845 carries the post-translational modification Phosphoserine. The stretch at 870 to 909 forms a coiled coil; sequence ELLEYTKSIEKLNSSLHFLQQEMQRLSLQQEMLMQMREQQ. The tract at residues 905–1016 is MBD region; it reads MREQQSWVIS…IQTRSFVCFG (112 aa). S914 and S919 each carry phosphoserine. Disordered regions lie at residues 930-1059 and 1078-1099; these read RQAG…PLES and NEDQ…PTAP. Low complexity predominate over residues 935-946; the sequence is SSAAAPFSADSP. A compositionally biased stretch (polar residues) spans 952–971; it reads SPQSSTRKSASFSVKNQRTP. A phosphothreonine mark is found at T979, T984, and T986. S990 and S1001 each carry phosphoserine. The span at 1001–1011 shows a compositional bias: polar residues; it reads SPSQVPIQTRS. 2 stretches are compositionally biased toward basic and acidic residues: residues 1020–1037 and 1044–1056; these read EPQK…EPSE and SCDH…EVKP. Over residues 1086–1098 the composition is skewed to pro residues; that stretch reads TDPPPKPVFPPTA. S1129 is modified (phosphoserine). Positions 1147–1219 form a coiled coil; sequence KDDQKAENDM…REFIRQEYMR (73 aa). Positions 1167 to 1233 are enriched in basic and acidic residues; it reads RLRREKETQL…KLMEDMDTVI (67 aa). The disordered stretch occupies residues 1167–1327; that stretch reads RLRREKETQL…TTSSVASGTE (161 aa). The segment covering 1268 to 1280 has biased composition (polar residues); sequence SSLSLASLNTGDT. Residues S1294, S1300, and S1302 each carry the phosphoserine modification. Over residues 1315 to 1327 the composition is skewed to polar residues; the sequence is NASTTSSVASGTE. Residues 1330-1464 enclose the CKK domain; that stretch reads GPKLYKEPSA…QTKRPVTPKK (135 aa).

Belongs to the CAMSAP1 family. Interacts with CAMSAP3. Interacts with KATNA1 and KATNB1; leading to regulate the length of CAMSAP2-decorated microtubule stretches. Interacts with a complex formed by AKAP9 and PDE4DIP; this interaction, which is PDE4DIP isoform-specific, recruits CAMSAP2 to the Golgi. Interacts with MAPRE1/EB1. Present in the soma, axon, and dendritic shaft of hippocampal neurons (at protein level).

It localises to the cytoplasm. The protein resides in the cytoskeleton. Its subcellular location is the golgi apparatus. It is found in the cilium basal body. Functionally, key microtubule-organizing protein that specifically binds the minus-end of non-centrosomal microtubules and regulates their dynamics and organization. Specifically recognizes growing microtubule minus-ends and autonomously decorates and stabilizes microtubule lattice formed by microtubule minus-end polymerization. Acts on free microtubule minus-ends that are not capped by microtubule-nucleating proteins or other factors and protects microtubule minus-ends from depolymerization. In addition, it also reduces the velocity of microtubule polymerization. Through the microtubule cytoskeleton, also regulates the organization of cellular organelles including the Golgi and the early endosomes. Essential for the tethering, but not for nucleation of non-centrosomal microtubules at the Golgi: together with Golgi-associated proteins AKAP9 and PDE4DIP, required to tether non-centrosomal minus-end microtubules to the Golgi, an important step for polarized cell movement. Also acts as a regulator of neuronal polarity and development: localizes to non-centrosomal microtubule minus-ends in neurons and stabilizes non-centrosomal microtubules, which is required for neuronal polarity, axon specification and dendritic branch formation. Through the microtubule cytoskeleton, regulates the autophagosome transport. The polypeptide is Calmodulin-regulated spectrin-associated protein 2 (Rattus norvegicus (Rat)).